A 1675-amino-acid chain; its full sequence is Coadhesin (1675 aa).

The Extracellular portion of the chain corresponds to 1-1356 (QGNYYSYGGT…TIADQADAAK (1356 aa)). Positions 11-160 (TPGTPIGCTN…ICMRVGVESC (150 aa)) constitute an F5/8 type C 1 domain. TSP type-1 domains lie at 168 to 220 (NGAW…NDCV), 224 to 279 (NGGW…QFCP), 281 to 336 (DGGW…QCCP), 338 to 393 (HGGW…QTCP), 403 to 458 (NGNY…IPCP), 460 to 515 (NGNW…TACP), and 517 to 572 (DGGW…GPCP). Intrachain disulfides connect cysteine 180–cysteine 216, cysteine 184–cysteine 219, cysteine 194–cysteine 206, cysteine 236–cysteine 273, cysteine 240–cysteine 278, cysteine 251–cysteine 263, cysteine 293–cysteine 330, cysteine 297–cysteine 335, cysteine 308–cysteine 320, cysteine 350–cysteine 387, cysteine 354–cysteine 392, cysteine 365–cysteine 377, cysteine 415–cysteine 452, cysteine 419–cysteine 457, cysteine 430–cysteine 442, cysteine 472–cysteine 509, cysteine 476–cysteine 514, cysteine 487–cysteine 499, cysteine 528–cysteine 566, cysteine 532–cysteine 571, and cysteine 543–cysteine 555. Positions 567-588 (NKGPCPTSPPTISPPTTGSPAD) are disordered. VWFA domains lie at 595 to 769 (DLVF…MDRI), 778 to 958 (DIGF…FKAL), and 966 to 1141 (DLTF…ISII). The region spanning 1144–1198 (PSGLSKWSSWSACSKTCRYLGKAGTQIRTRDCKIPELGCDGMRIDTVECNKMDCE) is the TSP type-1 8 domain. 3 cysteine pairs are disulfide-bonded: cysteine 1156–cysteine 1192, cysteine 1160–cysteine 1197, and cysteine 1175–cysteine 1182. The F5/8 type C 2 domain maps to 1192 to 1336 (CNKMDCEGCG…PCMQAAVFGC (145 aa)). A helical membrane pass occupies residues 1357–1377 (GILIVLWILAGILTFLLLMAC). Residues 1378–1675 (CYYCCWHVCC…RGEEWYSRWG (298 aa)) are Cytoplasmic-facing. Residues 1463 to 1480 (EKHVTAEDVKSEKPKYSE) are compositionally biased toward basic and acidic residues. The segment at 1463 to 1491 (EKHVTAEDVKSEKPKYSEEASSGTIKSGS) is disordered. Positions 1481 to 1491 (EASSGTIKSGS) are enriched in polar residues.

In terms of tissue distribution, component of the acid-insoluble and acid-soluble organic matrix of the aragonitic skeleton (at protein level).

Its subcellular location is the membrane. This chain is Coadhesin, found in Acropora millepora (Staghorn coral).